A 287-amino-acid polypeptide reads, in one-letter code: MMKPFGKVLCAAGSLAVLLAFFWRDTFQPEQLSGARVLLTGASAGIGEQMAYHYATFGAEIVLTARREAVLQEVMKKCLTLGAKKVFYIPADMSSPSEPDRVVQFAVQNLGGLDYLVLNHIGVSPFQMWGGDVEHTRWLMQVNFFSYVALATAALPTLEKNHGSVVVVSSLTGKIPTPFTTSYSATKFALDGFFSSLRHELTMQKRNVSITLCILGLIDTDAALEKTRGKVFIAASPAAEAALAIIRGGAARLRELFYPWWLQPVHGLWVLLPNPRVLQSFYNYSGP.

The first 20 residues, 1-20 (MMKPFGKVLCAAGSLAVLLA), serve as a signal peptide directing secretion. NADP(+) contacts are provided by residues 41–67 (GASA…TARR), 92–93 (DM), and 119–121 (NHI). S170 serves as a coordination point for substrate. Y183 functions as the Proton acceptor in the catalytic mechanism. NADP(+) is bound by residues 183–187 (YSATK) and 216–222 (GLIDTDA).

It belongs to the short-chain dehydrogenases/reductases (SDR) family.

It localises to the secreted. It catalyses the reaction cortisone + NADPH + H(+) = cortisol + NADP(+). Unidirectional NADP(+)-dependent cortisol dehydrogenase (in vitro). The sequence is that of Hydroxysteroid 11-beta-dehydrogenase 1-like protein (HSD11B1L) from Gallus gallus (Chicken).